Here is a 160-residue protein sequence, read N- to C-terminus: SsrA-binding protein (160 aa).

The protein belongs to the SmpB family.

The protein resides in the cytoplasm. In terms of biological role, required for rescue of stalled ribosomes mediated by trans-translation. Binds to transfer-messenger RNA (tmRNA), required for stable association of tmRNA with ribosomes. tmRNA and SmpB together mimic tRNA shape, replacing the anticodon stem-loop with SmpB. tmRNA is encoded by the ssrA gene; the 2 termini fold to resemble tRNA(Ala) and it encodes a 'tag peptide', a short internal open reading frame. During trans-translation Ala-aminoacylated tmRNA acts like a tRNA, entering the A-site of stalled ribosomes, displacing the stalled mRNA. The ribosome then switches to translate the ORF on the tmRNA; the nascent peptide is terminated with the 'tag peptide' encoded by the tmRNA and targeted for degradation. The ribosome is freed to recommence translation, which seems to be the essential function of trans-translation. This Novosphingobium aromaticivorans (strain ATCC 700278 / DSM 12444 / CCUG 56034 / CIP 105152 / NBRC 16084 / F199) protein is SsrA-binding protein.